A 932-amino-acid polypeptide reads, in one-letter code: Alanine--tRNA ligase, mitochondrial (932 aa).

Positions 458–480 (SRLTWNTSSSSSDQTTQQTTQLP) are disordered. A compositionally biased stretch (low complexity) spans 464-478 (TSSSSSDQTTQQTTQ). Zn(2+) is bound by residues His610, His614, Cys713, and His717.

Belongs to the class-II aminoacyl-tRNA synthetase family. In terms of assembly, monomer. The cofactor is Zn(2+).

It localises to the mitochondrion. The enzyme catalyses tRNA(Ala) + L-alanine + ATP = L-alanyl-tRNA(Ala) + AMP + diphosphate. In terms of biological role, catalyzes the attachment of alanine to tRNA(Ala) in a two-step reaction: alanine is first activated by ATP to form Ala-AMP and then transferred to the acceptor end of tRNA(Ala). Also edits incorrectly charged tRNA(Ala) via its editing domain. This Dictyostelium discoideum (Social amoeba) protein is Alanine--tRNA ligase, mitochondrial (malaS).